Here is a 282-residue protein sequence, read N- to C-terminus: Bis(5'-nucleosyl)-tetraphosphatase, symmetrical (282 aa).

The protein belongs to the Ap4A hydrolase family.

It carries out the reaction P(1),P(4)-bis(5'-adenosyl) tetraphosphate + H2O = 2 ADP + 2 H(+). Hydrolyzes diadenosine 5',5'''-P1,P4-tetraphosphate to yield ADP. This is Bis(5'-nucleosyl)-tetraphosphatase, symmetrical from Escherichia coli O81 (strain ED1a).